Here is a 507-residue protein sequence, read N- to C-terminus: MTSTFMGLETARRALSAQQAALSTTANNVANANTDGYTRQRVSLEATDYFPAVSKNAEKTAGQMGTGVQGKSVERIRDIFLDYQYRLQNNSAGYYDTKAKALSQMEGVLNETDDSGLNSVLNSFWNSLQELSNNTNEESARSVVARKGQAVAETFNYISESLTNVQSNLKAELNTTVLDVNSLLSQLNSLNKQIAQVEPVGLLPNGLYDQRDLLIDKLSSMVDIKVSYNKSGGNALASAEGTVSIEILDKNKQSLGTVLDGKNYEVSELAANYDNETGLVSSISIGDTAVQAESFSSKGSLLGFIESYGYITADGQEKGVYPEMLSDLDNMALEFAKAFNEVHRNGVTKSGEQGGDFFDFTGGETEPAKGAAGKIKVADSIIDSKGANIAFSLTGAANDNANATKLANVLTGKITINGKETSVLDYYAGLIGELGIEAQEANRLASNTETQLNDADINRQQMSAVSLDEEMTNMIQFQHAYNAAARMVTLQDELLDKVINGMGVGGR.

This sequence belongs to the flagella basal body rod proteins family.

The protein localises to the secreted. It is found in the bacterial flagellum. The protein is Flagellar hook-associated protein 1 (flgK) of Bacillus subtilis (strain 168).